A 334-amino-acid chain; its full sequence is Biotin synthase (334 aa).

In terms of domain architecture, Radical SAM core spans glutamate 55–arginine 280. 3 residues coordinate [4Fe-4S] cluster: cysteine 70, cysteine 74, and cysteine 77. Cysteine 113, cysteine 205, and arginine 275 together coordinate [2Fe-2S] cluster.

This sequence belongs to the radical SAM superfamily. Biotin synthase family. As to quaternary structure, homodimer. Requires [4Fe-4S] cluster as cofactor. [2Fe-2S] cluster serves as cofactor.

It catalyses the reaction (4R,5S)-dethiobiotin + (sulfur carrier)-SH + 2 reduced [2Fe-2S]-[ferredoxin] + 2 S-adenosyl-L-methionine = (sulfur carrier)-H + biotin + 2 5'-deoxyadenosine + 2 L-methionine + 2 oxidized [2Fe-2S]-[ferredoxin]. It participates in cofactor biosynthesis; biotin biosynthesis; biotin from 7,8-diaminononanoate: step 2/2. Its function is as follows. Catalyzes the conversion of dethiobiotin (DTB) to biotin by the insertion of a sulfur atom into dethiobiotin via a radical-based mechanism. In Corynebacterium glutamicum (strain R), this protein is Biotin synthase.